The chain runs to 433 residues: L-2-hydroxyglutarate dehydrogenase, mitochondrial (433 aa).

The protein belongs to the L2HGDH family. The cofactor is FAD.

The protein localises to the mitochondrion. The enzyme catalyses (S)-2-hydroxyglutarate + A = 2-oxoglutarate + AH2. The polypeptide is L-2-hydroxyglutarate dehydrogenase, mitochondrial (Caenorhabditis elegans).